Reading from the N-terminus, the 1407-residue chain is DNA-directed RNA polymerase subunit beta' (1407 aa).

C70, C72, C85, and C88 together coordinate Zn(2+). Residues D460, D462, and D464 each coordinate Mg(2+). Zn(2+)-binding residues include C814, C888, C895, and C898.

This sequence belongs to the RNA polymerase beta' chain family. The RNAP catalytic core consists of 2 alpha, 1 beta, 1 beta' and 1 omega subunit. When a sigma factor is associated with the core the holoenzyme is formed, which can initiate transcription. It depends on Mg(2+) as a cofactor. The cofactor is Zn(2+).

It carries out the reaction RNA(n) + a ribonucleoside 5'-triphosphate = RNA(n+1) + diphosphate. Functionally, DNA-dependent RNA polymerase catalyzes the transcription of DNA into RNA using the four ribonucleoside triphosphates as substrates. This chain is DNA-directed RNA polymerase subunit beta', found in Erwinia tasmaniensis (strain DSM 17950 / CFBP 7177 / CIP 109463 / NCPPB 4357 / Et1/99).